The following is a 530-amino-acid chain: MTKYVFVTGGVVSSLGKGIVAASLGRLLKNRGLKVTIQKFDPYINVDPGTMSPYQHGEVFVTDDGTETDLDLGHYERFIDNNLNKYSNVTTGKIYSEVLRKERKGEYLGATVQVIPHITNMIKEKIMRAATTTDSDIVITEIGGTVGDIESLPFLEALRQMKADVGAENCIYIHTTLVPYLKAAGEMKTKPTQHSVKELRGIGIQPNVLVCRTEKAIPDDMRNKIAQFCDVEPEAVVESRDAESIYDIPLLLKNQGLDDFVLNHFKMTAPEADMTEWIDMLHTIKNLEGTKKIALVGKYIELQDAYISVNEALRHAGYVYNTDVKVTPIQSEDITKENVAETLAGFDGIIVPGGFGDRGLEGMILSIQYARENDVPYLGICLGMQMASIEFARNVAGITDATTGEVHPDAEHKLIDIMSDQKDLENMGGTQRLGLYPCKLKPGTKTAEAYDNQSVIQQRHRHRYEFNNEYRDLLTDKGLVFAGTSPDNRLVEVIEIPENKFFVAAQYHPEFLSRPNKPEGLFKAFIGATM.

The tract at residues 1–267 (MTKYVFVTGG…DDFVLNHFKM (267 aa)) is amidoligase domain. Position 13 (Ser13) interacts with CTP. Ser13 is a UTP binding site. 14-19 (SLGKGI) is a binding site for ATP. Tyr54 is an L-glutamine binding site. Asp71 is an ATP binding site. The Mg(2+) site is built by Asp71 and Glu141. Residues 148 to 150 (DIE), 188 to 193 (KTKPTQ), and Lys224 contribute to the CTP site. Residues 188–193 (KTKPTQ) and Lys224 contribute to the UTP site. 240–242 (RDA) is a binding site for ATP. Residues 292 to 530 (KIALVGKYIE…LFKAFIGATM (239 aa)) enclose the Glutamine amidotransferase type-1 domain. Residue Gly354 participates in L-glutamine binding. Catalysis depends on Cys381, which acts as the Nucleophile; for glutamine hydrolysis. L-glutamine contacts are provided by residues 382-385 (LGMQ), Glu405, and Arg463. Residues His508 and Glu510 contribute to the active site.

This sequence belongs to the CTP synthase family. As to quaternary structure, homotetramer.

The enzyme catalyses UTP + L-glutamine + ATP + H2O = CTP + L-glutamate + ADP + phosphate + 2 H(+). The catalysed reaction is L-glutamine + H2O = L-glutamate + NH4(+). It carries out the reaction UTP + NH4(+) + ATP = CTP + ADP + phosphate + 2 H(+). Its pathway is pyrimidine metabolism; CTP biosynthesis via de novo pathway; CTP from UDP: step 2/2. Its activity is regulated as follows. Allosterically activated by GTP, when glutamine is the substrate; GTP has no effect on the reaction when ammonia is the substrate. The allosteric effector GTP functions by stabilizing the protein conformation that binds the tetrahedral intermediate(s) formed during glutamine hydrolysis. Inhibited by the product CTP, via allosteric rather than competitive inhibition. Functionally, catalyzes the ATP-dependent amination of UTP to CTP with either L-glutamine or ammonia as the source of nitrogen. Regulates intracellular CTP levels through interactions with the four ribonucleotide triphosphates. The sequence is that of CTP synthase from Latilactobacillus sakei subsp. sakei (strain 23K) (Lactobacillus sakei subsp. sakei).